The chain runs to 179 residues: Inner membrane-spanning protein YciB (179 aa).

5 helical membrane-spanning segments follow: residues 22–42 (IYAATSALIVATAIVLIYSWV), 50–70 (MALITFVLVAVFGGLTLFFHN), 76–96 (WKVTVIYALFAGALLMSQWVM), 121–141 (LAWALFFIVCGLANIYIAFWL), and 149–169 (FKVFGLTALTLIFTLLSGVYI).

Belongs to the YciB family.

The protein localises to the cell inner membrane. Its function is as follows. Plays a role in cell envelope biogenesis, maintenance of cell envelope integrity and membrane homeostasis. This Salmonella arizonae (strain ATCC BAA-731 / CDC346-86 / RSK2980) protein is Inner membrane-spanning protein YciB.